The following is a 1062-amino-acid chain: Inactive tyrosine-protein kinase 7 (1062 aa).

The N-terminal stretch at 1–22 (MGARPLTLLRALLLPLLAGAQA) is a signal peptide. Ig-like C2-type domains follow at residues 23–112 (AIVF…ASFN), 120–210 (PVVL…FTLS), 217–309 (ARVV…EATL), 301–399 (PPIV…VNIT), 404–489 (PTWL…ARVQ), 495–578 (KFTP…HVQL), and 570–672 (GQIR…APLL). The Extracellular portion of the chain corresponds to 23-696 (AIVFIKEPSS…SPPPYKMIQT (674 aa)). Cys-45 and Cys-93 are joined by a disulfide. N-linked (GlcNAc...) asparagine glycosylation is found at Asn-98, Asn-108, Asn-176, Asn-206, Asn-260, and Asn-275. A disulfide bridge links Cys-142 with Cys-192. 2 cysteine pairs are disulfide-bonded: Cys-238/Cys-293 and Cys-335/Cys-383. Residues Asn-397, Asn-455, Asn-559, and Asn-638 are each glycosylated (N-linked (GlcNAc...) asparagine). 3 cysteine pairs are disulfide-bonded: Cys-425–Cys-473, Cys-516–Cys-562, and Cys-605–Cys-656. Residues 697 to 717 (IGLSVGAAVAYIIAVLGLMFY) traverse the membrane as a helical segment. The Cytoplasmic portion of the chain corresponds to 718–1062 (CKKRCKAKRL…LGDSPADSKQ (345 aa)). Disordered regions lie at residues 728-750 (QKQPEGEEPEMECLNGGPLQNGQ) and 1039-1062 (NPKDRPSFSEIASTLGDSPADSKQ). The interval 786-1062 (ASLQPITTLG…LGDSPADSKQ (277 aa)) is interaction with CTNNB1. A Protein kinase; inactive domain is found at 788–1058 (LQPITTLGKS…IASTLGDSPA (271 aa)). Ser-1056 is modified (phosphoserine).

This sequence belongs to the protein kinase superfamily. Tyr protein kinase family. Insulin receptor subfamily. In terms of assembly, interacts with CTNNB1. Post-translationally, MMP14 cleaves PTK7 between Pro-613 and Leu-614 generating an N-terminal soluble (70 kDa) fragment and a membrane C-terminal (50 kDa) fragment. Proteolysis by MMP14 regulates PTK7 function in non-canonical Wnt signaling pathway. In terms of tissue distribution, expressed at high levels in lung and un-pregnant uterus among adult tissues, and in the tail, limbs, somites, gut and craniofacial regions among embryonic tissues.

It is found in the membrane. The protein resides in the cell junction. Functionally, inactive tyrosine kinase involved in Wnt signaling pathway. Component of both the non-canonical (also known as the Wnt/planar cell polarity signaling) and the canonical Wnt signaling pathway. Functions in cell adhesion, cell migration, cell polarity, proliferation, actin cytoskeleton reorganization and apoptosis. Has a role in embryogenesis, epithelial tissue organization and angiogenesis. The sequence is that of Inactive tyrosine-protein kinase 7 (Ptk7) from Mus musculus (Mouse).